Consider the following 245-residue polypeptide: Ribonuclease 3 (245 aa).

Residues 18-146 (LSKFLENLSI…FVGAIYLDSG (129 aa)) form the RNase III domain. Glu-59 lines the Mg(2+) pocket. Residue Asp-63 is part of the active site. Asp-132 and Glu-135 together coordinate Mg(2+). Glu-135 is a catalytic residue. Residues 173–242 (DYKSLLQEYV…AEVALKAMEN (70 aa)) enclose the DRBM domain.

It belongs to the ribonuclease III family. Homodimer. It depends on Mg(2+) as a cofactor.

The protein resides in the cytoplasm. It catalyses the reaction Endonucleolytic cleavage to 5'-phosphomonoester.. In terms of biological role, digests double-stranded RNA. Involved in the processing of primary rRNA transcript to yield the immediate precursors to the large and small rRNAs (23S and 16S). Processes some mRNAs, and tRNAs when they are encoded in the rRNA operon. Processes pre-crRNA and tracrRNA of type II CRISPR loci if present in the organism. This Borreliella burgdorferi (strain ATCC 35210 / DSM 4680 / CIP 102532 / B31) (Borrelia burgdorferi) protein is Ribonuclease 3.